The primary structure comprises 1295 residues: Serine protease pet autotransporter (1295 aa).

Positions 1–52 (MNKIYSIKYSAATGGLIAVSELAKKVICKTNRKISAALLSLAVISYTNIIYA) are cleaved as a signal peptide. The Peptidase S6 domain maps to 54-304 (NMDISKAWAR…TPFDSKTTNE (251 aa)). Residues His124, Asp153, and Ser260 each act as charge relay system in the active site. One can recognise an Autotransporter domain in the interval 1029-1295 (DINGEAGAWA…AINANFRYSF (267 aa)).

Post-translationally, cleaved to release the mature protein from the outer membrane.

The protein resides in the periplasm. The protein localises to the secreted. Its subcellular location is the cell surface. It is found in the cell outer membrane. With respect to regulation, inhibition of cytotoxic activity by phenylmethylsulfonyl fluoride. Functionally, serine protease with enterotoxic and cytotoxic activity. Internalization into the host cell is required for the induction of cytopathic effects. However, the serine activity is not necessary for secretion and internalization into the host cell. The sequence is that of Serine protease pet autotransporter (pet) from Escherichia coli O44:H18 (strain 042 / EAEC).